Consider the following 528-residue polypeptide: Potassium voltage-gated channel subfamily A member 3 (528 aa).

Residues 1–32 (MTVVPGDHLLEPEAAGGGGGDPPQGGCGSGGG) form a disordered region. Residues 1 to 187 (MTVVPGDHLL…EYPESSGPAR (187 aa)) lie on the Cytoplasmic side of the membrane. Over residues 15–32 (AGGGGGDPPQGGCGSGGG) the composition is skewed to gly residues. The helical transmembrane segment at 188–206 (GIAIVSVLVILISIVIFCL) threads the bilayer. Residues 207 to 247 (ETLPEFRDEKDYPASPSQDVFEAANNSTSGAPSGASSFSDP) are Extracellular-facing. N232 is a glycosylation site (N-linked (GlcNAc...) asparagine). Residues 248-269 (FFVVETLCIIWFSFELLVRFFA) traverse the membrane as a helical segment. C270 carries the S-palmitoyl cysteine lipid modification. Residues 270–280 (CPSKATFSRNI) lie on the Cytoplasmic side of the membrane. The helical transmembrane segment at 281–301 (MNLIDIVAIIPYFITLGTELA) threads the bilayer. The Extracellular segment spans residues 302-315 (ERQGNGQQAMSLAI). Residues 316–334 (LRVIRLVRVFRIFKLSRHS) form a helical; Voltage-sensor membrane-spanning segment. Residues 335–350 (KGLQILGQTLKASMRE) lie on the Cytoplasmic side of the membrane. Residues 351-370 (LGLLIFFLFIGVILFSSAVY) form a helical membrane-spanning segment. At 371–411 (FAEADDPSSGFNSIPDAFWWAVVTMTTVGYGDMHPVTIGGK) the chain is on the extracellular side. The Selectivity filter motif lies at 397-402 (TVGYGD). The chain crosses the membrane as a helical span at residues 412–434 (IVGSLCAIAGVLTIALPVPVIVS). Residues 435–528 (NFNYFYHRET…VNIKKIFTDV (94 aa)) are Cytoplasmic-facing. An interaction with KCNE4 region spans residues 435-528 (NFNYFYHRET…VNIKKIFTDV (94 aa)). Phosphotyrosine is present on Y452. Phosphoserine; by PKA is present on S473. A PDZ-binding motif is present at residues 526-528 (TDV).

The protein belongs to the potassium channel family. A (Shaker) (TC 1.A.1.2) subfamily. Kv1.3/KCNA3 sub-subfamily. In terms of assembly, homotetramer. Forms heterooligomers with KCNE4 which inhibits KCNA3 activity by impairing localization to the cell membrane. The stoichiometry of KCNA3 and KCNE4 in the heterooligomers are 4:1, 4:2, 4:3 or 4:4 respectively. Increasing the number of KCNE4 subunits steadily slows the activation KCNA3 and decreases its abundance at the cell membrane. However, a single subunit of KCNE4 is sufficient for the cooperative enhancement of the inactivating function of the channel. Interacts with SEC24D; this interaction is reduced in the presence of KCNE4. Interacts with DLG1, DLG2 and DLG4 via their PDZ domains. Post-translationally, N-glycosylation promotes the cell surface expression. In terms of processing, phosphorylation on Tyr-452 inhibits its channel activity.

It is found in the cell membrane. It carries out the reaction K(+)(in) = K(+)(out). Its activity is regulated as follows. Activity is up-regulated by JAK2. Functionally, mediates the voltage-dependent potassium ion permeability of excitable membranes. Assuming opened or closed conformations in response to the voltage difference across the membrane, the protein forms a potassium-selective channel through which potassium ions may pass in accordance with their electrochemical gradient. In Mus musculus (Mouse), this protein is Potassium voltage-gated channel subfamily A member 3 (Kcna3).